We begin with the raw amino-acid sequence, 618 residues long: MKKDVRILLVGEPRVGKTSLIMSLVSEEFPEEVPPRAEEITIPADVTPERVPTHIVDYSEAEQSDEQLHQEISQANVICIVYAVNNKHSIDKVTSRWIPLINERTDKDSRLPLILVGNKSDLVEYSSMETILPIMNQYTEIETCVECSAKNLKNISELFYYAQKAVLHPTGPLYCPEEKEMKPACIKALTRIFKISDQDNDGTLNDAELNFFQRICFNTPLAPQALEDVKNVVRKHISDGVADSGLTLKGFLFLHTLFIQRGRHETTWTVLRRFGYDDDLDLTPEYLFPLLKIPPDCTTELNHHAYLFLQSTFDKHDLDRDCALSPDELKDLFKVFPYIPWGPDVNNTVCTNERGWITYQGFLSQWTLTTYLDVQRCLEYLGYLGYSILTEQESQASAVTVTRDKKIDLQKKQTQRNVFRCNVIGVKNCGKSGVLQALLGRNLMRQKKIREDHKSYYAINTVYVYGQEKYLLLHDISESEFLTEAEIICDVVCLVYDVSNPKSFEYCARIFKQHFMDSRIPCLIVAAKSDLHEVKQEYSISPTDFCRKHKMPPPQAFTCNTADAPSKDIFVKLTTMAMYPHVTQADLKSSTFWLRASFGATVFAVLGFAMYKALLKQR.

Topologically, residues 1 to 592 are cytoplasmic; that stretch reads MKKDVRILLV…TQADLKSSTF (592 aa). One can recognise a Miro 1 domain in the interval 2–168; the sequence is KKDVRILLVG…FYYAQKAVLH (167 aa). 5 residues coordinate GTP: Arg14, Gly16, Lys17, Thr18, and Ser19. Thr18 is a Mg(2+) binding site. Residues Pro35 and Asp57 each contribute to the Mg(2+) site. Ser59 is a GTP binding site. The residue at position 92 (Lys92) is an N6-acetyllysine. Asn118, Lys119, Asp121, Ala149, and Lys150 together coordinate GTP. Lys153 participates in a covalent cross-link: Glycyl lysine isopeptide (Lys-Gly) (interchain with G-Cter in ubiquitin). The 36-residue stretch at 184–219 folds into the EF-hand 1 domain; it reads ACIKALTRIFKISDQDNDGTLNDAELNFFQRICFNT. The Ca(2+) site is built by Asp197, Asp199, Asp201, Thr203, and Glu208. Lys235 is covalently cross-linked (Glycyl lysine isopeptide (Lys-Gly) (interchain with G-Cter in ubiquitin)). The EF-hand 2 domain maps to 304–339; it reads HAYLFLQSTFDKHDLDRDCALSPDELKDLFKVFPYI. Residues Asp317, Asp319, Asp321, Ala323, and Glu328 each coordinate Ca(2+). Positions 416–579 constitute a Miro 2 domain; the sequence is RNVFRCNVIG…FVKLTTMAMY (164 aa). Positions 428, 429, 430, 431, 432, 433, and 447 each coordinate GTP. Position 428 (Asn428) interacts with Mg(2+). 15 residues coordinate GDP: Asn428, Cys429, Gly430, Lys431, Ser432, Gly433, Lys447, Lys454, Ser477, Glu478, Lys528, Asp530, Thr558, Cys559, and Asn560. GTP contacts are provided by Lys528, Asp530, Thr558, and Cys559. Residue Lys572 forms a Glycyl lysine isopeptide (Lys-Gly) (interchain with G-Cter in ubiquitin) linkage. The chain crosses the membrane as a helical; Anchor for type IV membrane protein span at residues 593–615; that stretch reads WLRASFGATVFAVLGFAMYKALL. The Mitochondrial intermembrane segment spans residues 616-618; sequence KQR.

Belongs to the mitochondrial Rho GTPase family. As to quaternary structure, homodimer. Interacts with the kinesin-binding proteins TRAK1/OIP106 and TRAK2/GRIF1, forming a link between mitochondria and the trafficking apparatus of the microtubules. Interacts with RAP1GDS1. Interacts with ARMCX1. Found in a complex with KIF5B, OGT, RHOT2 and TRAK1. In terms of processing, ubiquitinated by PRKN during mitophagy, leading to its degradation and enhancement of mitophagy. Deubiquitinated by USP30. Post-translationally, acetylation on Lys-92 decreases sensitivity of mitochondrial transport to elevated Ca(2+) levels, increases mitochondrial transport and promotes axon growth. Deacetylated by HDAC6 which blocks mitochondrial transport and mediates axon growth inhibition. As to expression, ubiquitously expressed. Expressed at high level in heart and skeletal muscle.

The protein resides in the mitochondrion outer membrane. It carries out the reaction GTP + H2O = GDP + phosphate + H(+). The enzyme catalyses ATP + H2O = ADP + phosphate + H(+). The catalysed reaction is UTP + H2O = UDP + phosphate + H(+). Atypical mitochondrial nucleoside-triphosphatase (NTPase) involved in mitochondrial trafficking. Probably involved in control of anterograde transport of mitochondria and their subcellular distribution. Promotes mitochondrial fission during high calcium conditions. Can hydrolyze GTP, ATP and UTP. The polypeptide is Mitochondrial Rho GTPase 1 (RHOT1) (Homo sapiens (Human)).